The chain runs to 418 residues: MEEIGILVEKAQDEIPALSVSRPQTGLSFLGPEPEDLEDLYSRYKKLQQELEFLEVQEEYIKDEQKNLKKEFLHAQEEVKRIQSIPLVIGQFLEAVDQNTAIVGSTTGSNYYVRILSTIDRELLKPNASVALHKHSNALVDVLPPEADSSIMMLTSDQKPDVMYADIGGMDIQKQEVREAVELPLTHFELYKQIGIDPPRGVLMYGPPGCGKTMLAKAVAHHTTAAFIRVVGSEFVQKYLGEGPRMVRDVFRLAKENAPAIIFIDEIDAIATKRFDAQTGADREVQRILLELLNQMDGFDQNVNVKVIMATNRADTLDPALLRPGRLDRKIEFPLPDRRQKRLIFSTITSKMNLSEEVDLEDYVARPDKISGADINSICQESGMLAVRENRYIVLAKDFEKAYKTVIKKDEQEHEFYK.

The residue at position 1 (Met1) is an N-acetylmethionine. At Ser21 the chain carries Phosphoserine. Thr25 is subject to Phosphothreonine. At Ser28 the chain carries Phosphoserine. 206-213 (GPPGCGKT) provides a ligand contact to ATP. 2 positions are modified to N6-acetyllysine: Lys397 and Lys401.

It belongs to the AAA ATPase family. In terms of assembly, component of the 19S proteasome regulatory particle complex. The 26S proteasome consists of a 20S core particle (CP) and two 19S regulatory subunits (RP). The regulatory particle is made of a lid composed of 9 subunits, a base containing 6 ATPases including PSMC4 and few additional components. Interacts with NR1I3. Interacts with PAAF1. Interacts with TRIM5. Interacts with ZFAND1.

The protein resides in the cytoplasm. It localises to the nucleus. Its function is as follows. Component of the 26S proteasome, a multiprotein complex involved in the ATP-dependent degradation of ubiquitinated proteins. This complex plays a key role in the maintenance of protein homeostasis by removing misfolded or damaged proteins, which could impair cellular functions, and by removing proteins whose functions are no longer required. Therefore, the proteasome participates in numerous cellular processes, including cell cycle progression, apoptosis, or DNA damage repair. PSMC4 belongs to the heterohexameric ring of AAA (ATPases associated with diverse cellular activities) proteins that unfolds ubiquitinated target proteins that are concurrently translocated into a proteolytic chamber and degraded into peptides. The protein is 26S proteasome regulatory subunit 6B (PSMC4) of Bos taurus (Bovine).